The following is a 327-amino-acid chain: uncharacterized protein (327 aa).

Residues Met-1 to Ser-17 are compositionally biased toward low complexity. A disordered region spans residues Met-1–Leu-22. Ala-2 carries the post-translational modification N-acetylalanine. Ser-37 bears the Phosphoserine mark. Positions Gly-76–Leu-113 are disordered. Position 129 is a phosphoserine (Ser-129). Polar residues predominate over residues Ser-134–Ala-148. The interval Ser-134–Asp-299 is disordered. A compositionally biased stretch (low complexity) spans Ser-162–Leu-176. Ser-175 is subject to Phosphoserine. Basic and acidic residues-rich tracts occupy residues Thr-182–Gly-202 and Pro-233–Gln-252. Ser-289 bears the Phosphoserine mark.

It localises to the cytoplasm. This is an uncharacterized protein from Homo sapiens (Human).